The primary structure comprises 100 residues: Ribosomal biogenesis factor (100 aa).

Phosphoserine is present on Ser-19. Lys-21 carries the N6-acetyllysine modification. At Ser-69 the chain carries Phosphoserine.

In terms of assembly, associates with the pre-60S ribosomal particles.

It is found in the nucleus. Its subcellular location is the nucleolus. Its function is as follows. Trans-acting factor in ribosome biogenesis required for efficient 40S and 60S subunit production. This is Ribosomal biogenesis factor (RBIS) from Bos taurus (Bovine).